The chain runs to 394 residues: Elongation factor Tu (394 aa).

One can recognise a tr-type G domain in the interval 10–204 (KPHVNVGTIG…HLDTYIPEPE (195 aa)). The tract at residues 19-26 (GHVDHGKT) is G1. Residue 19-26 (GHVDHGKT) participates in GTP binding. Residue Thr-26 coordinates Mg(2+). The G2 stretch occupies residues 60–64 (GITIN). The segment at 81-84 (DCPG) is G3. GTP contacts are provided by residues 81–85 (DCPGH) and 136–139 (NKCD). Residues 136 to 139 (NKCD) are G4. The tract at residues 174-176 (SAL) is G5.

The protein belongs to the TRAFAC class translation factor GTPase superfamily. Classic translation factor GTPase family. EF-Tu/EF-1A subfamily. Monomer.

The protein localises to the cytoplasm. It catalyses the reaction GTP + H2O = GDP + phosphate + H(+). Functionally, GTP hydrolase that promotes the GTP-dependent binding of aminoacyl-tRNA to the A-site of ribosomes during protein biosynthesis. In Actinobacillus pleuropneumoniae serotype 5b (strain L20), this protein is Elongation factor Tu.